Consider the following 485-residue polypeptide: Adenosylhomocysteinase (485 aa).

Substrate is bound by residues threonine 64, aspartate 139, and glutamate 205. Residue 206 to 208 (TTT) coordinates NAD(+). Residues lysine 235 and aspartate 239 each contribute to the substrate site. NAD(+) is bound by residues asparagine 240, 269-274 (GYGDVG), glutamate 292, asparagine 327, 348-350 (IGH), and asparagine 397.

Belongs to the adenosylhomocysteinase family. In terms of assembly, homotetramer. NAD(+) is required as a cofactor.

The enzyme catalyses S-adenosyl-L-homocysteine + H2O = L-homocysteine + adenosine. The protein operates within amino-acid biosynthesis; L-homocysteine biosynthesis; L-homocysteine from S-adenosyl-L-homocysteine: step 1/1. In terms of biological role, adenosylhomocysteine is a competitive inhibitor of S-adenosyl-L-methionine-dependent methyl transferase reactions; therefore adenosylhomocysteinase may play a key role in the control of methylations via regulation of the intracellular concentration of adenosylhomocysteine. The chain is Adenosylhomocysteinase (SAHH) from Catharanthus roseus (Madagascar periwinkle).